Reading from the N-terminus, the 444-residue chain is CCA-adding enzyme (444 aa).

Residues Ser57 and Arg60 each contribute to the ATP site. Residues Ser57 and Arg60 each contribute to the CTP site. Mg(2+)-binding residues include Asp69, Asp71, and Asp124. His147, Lys168, and Tyr177 together coordinate ATP. Residues His147, Lys168, and Tyr177 each coordinate CTP.

It belongs to the tRNA nucleotidyltransferase/poly(A) polymerase family. Archaeal CCA-adding enzyme subfamily. As to quaternary structure, homodimer. The cofactor is Mg(2+).

It catalyses the reaction a tRNA precursor + 2 CTP + ATP = a tRNA with a 3' CCA end + 3 diphosphate. The catalysed reaction is a tRNA with a 3' CCA end + 2 CTP + ATP = a tRNA with a 3' CCACCA end + 3 diphosphate. Catalyzes the addition and repair of the essential 3'-terminal CCA sequence in tRNAs without using a nucleic acid template. Adds these three nucleotides in the order of C, C, and A to the tRNA nucleotide-73, using CTP and ATP as substrates and producing inorganic pyrophosphate. tRNA 3'-terminal CCA addition is required both for tRNA processing and repair. Also involved in tRNA surveillance by mediating tandem CCA addition to generate a CCACCA at the 3' terminus of unstable tRNAs. While stable tRNAs receive only 3'-terminal CCA, unstable tRNAs are marked with CCACCA and rapidly degraded. The protein is CCA-adding enzyme of Methanococcus maripaludis (strain DSM 14266 / JCM 13030 / NBRC 101832 / S2 / LL).